Here is a 199-residue protein sequence, read N- to C-terminus: Prolactin-1 (199 aa).

Cystine bridges form between cysteine 4–cysteine 11, cysteine 58–cysteine 174, and cysteine 191–cysteine 199. Residue asparagine 60 is glycosylated (N-linked (GlcNAc...) asparagine).

This sequence belongs to the somatotropin/prolactin family. In terms of processing, glycosylated.

Its subcellular location is the secreted. This is Prolactin-1 from Alligator mississippiensis (American alligator).